The sequence spans 295 residues: UDP-N-acetylenolpyruvoylglucosamine reductase (295 aa).

Positions 23 to 188 (KVGGPADFLA…ISAKFALKPG (166 aa)) constitute an FAD-binding PCMH-type domain. Arginine 167 is an active-site residue. Serine 217 acts as the Proton donor in catalysis. Glutamate 287 is an active-site residue.

The protein belongs to the MurB family. The cofactor is FAD.

It localises to the cytoplasm. The enzyme catalyses UDP-N-acetyl-alpha-D-muramate + NADP(+) = UDP-N-acetyl-3-O-(1-carboxyvinyl)-alpha-D-glucosamine + NADPH + H(+). It participates in cell wall biogenesis; peptidoglycan biosynthesis. Its function is as follows. Cell wall formation. This is UDP-N-acetylenolpyruvoylglucosamine reductase from Streptococcus pyogenes serotype M49 (strain NZ131).